The primary structure comprises 568 residues: Proline--tRNA ligase (568 aa).

The protein belongs to the class-II aminoacyl-tRNA synthetase family. ProS type 1 subfamily. In terms of assembly, homodimer.

It is found in the cytoplasm. It carries out the reaction tRNA(Pro) + L-proline + ATP = L-prolyl-tRNA(Pro) + AMP + diphosphate. Its function is as follows. Catalyzes the attachment of proline to tRNA(Pro) in a two-step reaction: proline is first activated by ATP to form Pro-AMP and then transferred to the acceptor end of tRNA(Pro). As ProRS can inadvertently accommodate and process non-cognate amino acids such as alanine and cysteine, to avoid such errors it has two additional distinct editing activities against alanine. One activity is designated as 'pretransfer' editing and involves the tRNA(Pro)-independent hydrolysis of activated Ala-AMP. The other activity is designated 'posttransfer' editing and involves deacylation of mischarged Ala-tRNA(Pro). The misacylated Cys-tRNA(Pro) is not edited by ProRS. The sequence is that of Proline--tRNA ligase from Lysinibacillus sphaericus (strain C3-41).